Here is a 1663-residue protein sequence, read N- to C-terminus: Cortactin-binding protein 2 (1663 aa).

Disordered stretches follow at residues 1 to 23 (MATDGASCEPDLSRAPEDAAGAA), 203 to 222 (KKKTNELEEELSAEKRRSTE), 367 to 440 (GASV…LHPG), 454 to 478 (GNANDPDQNGNTTQSPPSRDVSPTS), and 498 to 614 (RFTS…LPPK). Residues 119 to 276 (KKMQERMSAQ…EQLKKGSDSK (158 aa)) are a coiled coil. The segment covering 386–396 (PSTGSTSDPTS) has biased composition (low complexity). Asymmetric dimethylarginine is present on Arg498. Polar residues predominate over residues 583 to 593 (TVASTPSSLPQ). ANK repeat units lie at residues 709–739 (GRPTLLQQAAAQGNVTLLSMLLNEEGLDINY), 743–772 (DGHSALYSAAKNGHTDCVRLLLSAEAQVNA), 776–805 (NGFTPLCAAAAQGHFECVELLISYDANINH), 809–838 (GGQTPLYLACKNGNKECIKLLLEAGTNRSV), 842–871 (DGWTPVHAAVDTGNVDSLKLLMYHRIPAHG), and 912–942 (EGWTAAHIAASKGFKNCLEILCRHGGLEPER). The disordered stretch occupies residues 1448–1483 (KKGESGAWRKVNTSPRRKSGRFSLPTWNKPDLSTEG). Ser1524 is subject to Phosphoserine. The tract at residues 1560–1663 (DSSGNNPVLS…KNGHLEKPNK (104 aa)) is disordered. Polar residues-rich tracts occupy residues 1561–1574 (SSGNNPVLSATINN) and 1582–1599 (KEVSPLSSHQTTECSNSK). Residues 1624-1638 (SQNTKRSSSSSNTRQ) are compositionally biased toward low complexity. Positions 1645–1663 (SKEENWNLHKNGHLEKPNK) are enriched in basic and acidic residues.

Interacts with CTTN/cortactin SH3 domain. Interacts with STRN, STRN4/zinedin and MOB4/phocein; this interactions mediate the association with the STRIPAK core complex and may regulate dendritic spine distribution of the STRIPAK complex in hippocampal neurons. Activation of glutamate receptors weakens the interaction with STRN and STRN4.

The protein localises to the cytoplasm. It is found in the cell cortex. It localises to the cell projection. The protein resides in the dendritic spine. Functionally, regulates the dendritic spine distribution of CTTN/cortactin in hippocampal neurons, and thus controls dendritic spinogenesis and dendritic spine maintenance. Associates with the striatin-interacting phosphatase and kinase (STRIPAK) core complex to regulate dendritic spine distribution of the STRIPAK complex in hippocampal neurons. This is Cortactin-binding protein 2 (CTTNBP2) from Gorilla gorilla gorilla (Western lowland gorilla).